We begin with the raw amino-acid sequence, 211 residues long: Uridine kinase (211 aa).

12 to 19 (GGSGSGKT) serves as a coordination point for ATP.

It belongs to the uridine kinase family.

Its subcellular location is the cytoplasm. It catalyses the reaction uridine + ATP = UMP + ADP + H(+). It carries out the reaction cytidine + ATP = CMP + ADP + H(+). Its pathway is pyrimidine metabolism; CTP biosynthesis via salvage pathway; CTP from cytidine: step 1/3. The protein operates within pyrimidine metabolism; UMP biosynthesis via salvage pathway; UMP from uridine: step 1/1. The sequence is that of Uridine kinase (udk) from Bacillus subtilis (strain 168).